Reading from the N-terminus, the 773-residue chain is Glucan endo-1,3-beta-D-glucosidase (773 aa).

The segment at 1-194 (MPPGAKVPQA…KNYFSIAVLP (194 aa)) is beta-sandwich subdomain. In terms of domain architecture, GH81 spans 1 to 647 (MPPGAKVPQA…HWICNLDSLG (647 aa)). Mg(2+) contacts are provided by isoleucine 31, asparagine 34, glutamine 35, tyrosine 36, and alanine 89. The segment at 195 to 288 (DNTVSTLTYY…QGTSFKTVYR (94 aa)) is alpha/beta subdomain. A (alpha/beta)6 barrel subdomain region spans residues 298-647 (DKGTYDREAL…HWICNLDSLG (350 aa)). Residues tyrosine 327 and lysine 331 each contribute to the (1,3-beta-D-glucosyl)n site. The Ca(2+) site is built by aspartate 365, threonine 368, glutamate 373, and lysine 376. 2 residues coordinate (1,3-beta-D-glucosyl)n: aspartate 402 and histidine 406. Residue aspartate 402 is part of the active site. Residues leucine 454, arginine 455, and phenylalanine 457 each coordinate Ca(2+). (1,3-beta-D-glucosyl)n is bound by residues asparagine 477, glutamate 479, and glutamate 483. Active-site residues include glutamate 479 and glutamate 483. Residues lysine 527, lysine 618, asparagine 619, and tryptophan 621 each coordinate Mg(2+). The Ca(2+) site is built by aspartate 712, asparagine 714, aspartate 716, glycine 717, lysine 718, aspartate 723, aspartate 748, isoleucine 749, asparagine 750, aspartate 752, lysine 754, and aspartate 759.

The protein belongs to the glycosyl hydrolase 81 family. Ca(2+) serves as cofactor. The cofactor is Mg(2+).

The protein resides in the secreted. The enzyme catalyses Hydrolysis of (1-&gt;3)-beta-D-glucosidic linkages in (1-&gt;3)-beta-D-glucans.. With respect to regulation, inhibited by manganese, zinc, and copper ions. In terms of biological role, cleaves internal linkages in 1,3-beta-glucan. May contribute to plant biomass degradation. This is Glucan endo-1,3-beta-D-glucosidase from Acetivibrio thermocellus (strain ATCC 27405 / DSM 1237 / JCM 9322 / NBRC 103400 / NCIMB 10682 / NRRL B-4536 / VPI 7372) (Clostridium thermocellum).